Here is a 2567-residue protein sequence, read N- to C-terminus: Unconventional myosin-XVIIIb (2567 aa).

The interval 41-508 (LVRGTEKEAK…SRDSDQAPED (468 aa)) is disordered. Over residues 44-54 (GTEKEAKEARQ) the composition is skewed to basic and acidic residues. Over residues 71–104 (SISQPNSKSSSGTRSGSQQISQDDQSSSPGSSDI) the composition is skewed to low complexity. Composition is skewed to basic and acidic residues over residues 105–116 (LGKESEGSRSPD) and 160–176 (LDPD…HDAP). The span at 196–206 (SRTPCGSQAST) shows a compositional bias: polar residues. Basic and acidic residues-rich tracts occupy residues 251 to 265 (TELK…DRQG), 278 to 287 (RPGKAEKEGA), and 326 to 349 (SKWD…EKTG). Polar residues predominate over residues 350 to 362 (EPQTQMEKTSQVQ). Composition is skewed to basic and acidic residues over residues 367 to 377 (DDLRMGEKAGE), 410 to 420 (SQTEKGCEAPK), 471 to 485 (LEKD…KENQ), and 492 to 508 (EEGK…APED). The 763-residue stretch at 571–1333 (DQVEDLASLI…VISRLEKQRE (763 aa)) folds into the Myosin motor domain. 660–667 (GWSGAGKT) provides a ligand contact to ATP. Positions 1208–1232 (VESRSGQESPPPPQPGRDKPGAGGP) are disordered. A GPA region spans residues 1213-1240 (GQESPPPPQPGRDKPGAGGPLALDIPAL). A Phosphoserine modification is found at Ser-1216. In terms of domain architecture, IQ spans 1336–1365 (VSQSIVLFQAACKGFLSRQEFKKLKIRRLA). 3 coiled-coil regions span residues 1396–1783 (SATI…GLIG), 1825–1961 (KTSV…STVD), and 2014–2090 (ESQQ…VASS). Residues 1426 to 2083 (NELRQNTDLL…IRRIADLQAA (658 aa)) form a tail region. Ser-1829 bears the Phosphoserine mark. Polar residues predominate over residues 2139–2153 (TMRTPSRQSATSSRI). 2 disordered regions span residues 2139 to 2194 (TMRT…PVSP) and 2217 to 2249 (STER…PSAA). Basic and acidic residues predominate over residues 2158–2167 (INEEAGDTER). Residues 2168–2185 (TQSALALSRARSTNVHSK) are compositionally biased toward polar residues. Position 2193 is a phosphoserine (Ser-2193). Residues 2227-2238 (PLASRSTNTSPL) are compositionally biased toward polar residues. 2 positions are modified to phosphoserine: Ser-2296 and Ser-2309. The disordered stretch occupies residues 2357–2376 (SRPSMGRKLSSPTTPRDMLL). Ser-2377 is modified (phosphoserine). 2 disordered regions span residues 2444-2471 (FLPA…SQRS) and 2494-2567 (KSPE…YLQK). Positions 2494-2504 (KSPEPKEDPAH) are enriched in basic and acidic residues. The span at 2506–2520 (SDSSSSSGSIVSFKS) shows a compositional bias: low complexity. A compositionally biased stretch (basic and acidic residues) spans 2537–2556 (GGERTSPERREPGTGRKDDD).

The protein belongs to the TRAFAC class myosin-kinesin ATPase superfamily. Myosin family. In terms of assembly, homodimer. May interact with F actin through the GPA motif (Gly/Pro/Ala-rich). Selectively expressed in cardiac and skeletal muscles. Weakly expressed in testis, pancreas, placenta, prostate, lung and thymus.

The protein resides in the cytoplasm. Its subcellular location is the nucleus. It localises to the myofibril. It is found in the sarcomere. Its function is as follows. May be involved in intracellular trafficking of the muscle cell when in the cytoplasm, whereas entering the nucleus, may be involved in the regulation of muscle specific genes. May play a role in the control of tumor development and progression; restored MYO18B expression in lung cancer cells suppresses anchorage-independent growth. The chain is Unconventional myosin-XVIIIb (MYO18B) from Homo sapiens (Human).